The chain runs to 517 residues: Probable protein phosphatase 2C 20 (517 aa).

The tract at residues 1-59 (MWVMQGERRRARAPWGPPDTGGALLERWISRERRSDSRDASGSAKQRSAMGNSLPVESK) is disordered. The segment covering 28 to 39 (WISRERRSDSRD) has biased composition (basic and acidic residues). The PPM-type phosphatase domain occupies 70-373 (KYVVSSMQGW…DNTTVILVLF (304 aa)). Mn(2+)-binding residues include Asp105, Gly106, Glu323, and Asp364. The segment at 380-517 (AVPPVDTDTD…PPHDDTYHRW (138 aa)) is disordered. Positions 402–414 (GSNNATASDNNDP) are enriched in polar residues. Low complexity predominate over residues 438-455 (DATATAVGSSSTTAVAAD). Basic and acidic residues predominate over residues 499 to 517 (LPRSNPDKSPPHDDTYHRW).

This sequence belongs to the PP2C family. Requires Mg(2+) as cofactor. Mn(2+) serves as cofactor.

It catalyses the reaction O-phospho-L-seryl-[protein] + H2O = L-seryl-[protein] + phosphate. It carries out the reaction O-phospho-L-threonyl-[protein] + H2O = L-threonyl-[protein] + phosphate. The protein is Probable protein phosphatase 2C 20 of Oryza sativa subsp. japonica (Rice).